The chain runs to 186 residues: Adenine phosphoribosyltransferase (186 aa).

Belongs to the purine/pyrimidine phosphoribosyltransferase family. As to quaternary structure, homodimer.

The protein resides in the cytoplasm. It catalyses the reaction AMP + diphosphate = 5-phospho-alpha-D-ribose 1-diphosphate + adenine. It functions in the pathway purine metabolism; AMP biosynthesis via salvage pathway; AMP from adenine: step 1/1. Catalyzes a salvage reaction resulting in the formation of AMP, that is energically less costly than de novo synthesis. This is Adenine phosphoribosyltransferase from Xanthomonas oryzae pv. oryzae (strain PXO99A).